The following is a 556-amino-acid chain: Formate--tetrahydrofolate ligase 1 (556 aa).

65–72 lines the ATP pocket; the sequence is TPAGEGKT.

It belongs to the formate--tetrahydrofolate ligase family.

The enzyme catalyses (6S)-5,6,7,8-tetrahydrofolate + formate + ATP = (6R)-10-formyltetrahydrofolate + ADP + phosphate. It participates in one-carbon metabolism; tetrahydrofolate interconversion. In Desulfitobacterium hafniense (strain Y51), this protein is Formate--tetrahydrofolate ligase 1.